A 261-amino-acid chain; its full sequence is tRNA (guanine-N(7)-)-methyltransferase (261 aa).

Positions 75, 100, 127, and 150 each coordinate S-adenosyl-L-methionine. Aspartate 150 is a catalytic residue. Lysine 154 serves as a coordination point for substrate. The tract at residues 156–161 is interaction with RNA; it reads RHNKRR. Substrate is bound by residues aspartate 186 and 223–226; that span reads THFE.

The protein belongs to the class I-like SAM-binding methyltransferase superfamily. TrmB family.

The enzyme catalyses guanosine(46) in tRNA + S-adenosyl-L-methionine = N(7)-methylguanosine(46) in tRNA + S-adenosyl-L-homocysteine. It functions in the pathway tRNA modification; N(7)-methylguanine-tRNA biosynthesis. Catalyzes the formation of N(7)-methylguanine at position 46 (m7G46) in tRNA. The protein is tRNA (guanine-N(7)-)-methyltransferase of Xanthomonas campestris pv. campestris (strain 8004).